The primary structure comprises 547 residues: Glucose-6-phosphate isomerase (547 aa).

The Proton donor role is filled by Glu351. Active-site residues include His382 and Lys509.

The protein belongs to the GPI family.

The protein localises to the cytoplasm. The enzyme catalyses alpha-D-glucose 6-phosphate = beta-D-fructose 6-phosphate. The protein operates within carbohydrate biosynthesis; gluconeogenesis. Its pathway is carbohydrate degradation; glycolysis; D-glyceraldehyde 3-phosphate and glycerone phosphate from D-glucose: step 2/4. Catalyzes the reversible isomerization of glucose-6-phosphate to fructose-6-phosphate. The polypeptide is Glucose-6-phosphate isomerase (Coxiella burnetii (strain CbuK_Q154) (Coxiella burnetii (strain Q154))).